Consider the following 365-residue polypeptide: Eukaryotic translation initiation factor 3 subunit H (365 aa).

The region spanning 11–160 (VKVEALVVMK…LRAFRLSPKF (150 aa)) is the MPN domain.

The protein belongs to the eIF-3 subunit H family. As to quaternary structure, component of the eukaryotic translation initiation factor 3 (eIF-3) complex.

The protein localises to the cytoplasm. Component of the eukaryotic translation initiation factor 3 (eIF-3) complex, which is involved in protein synthesis of a specialized repertoire of mRNAs and, together with other initiation factors, stimulates binding of mRNA and methionyl-tRNAi to the 40S ribosome. The eIF-3 complex specifically targets and initiates translation of a subset of mRNAs involved in cell proliferation. The chain is Eukaryotic translation initiation factor 3 subunit H from Aspergillus niger (strain ATCC MYA-4892 / CBS 513.88 / FGSC A1513).